Here is a 309-residue protein sequence, read N- to C-terminus: Probable manganese-dependent inorganic pyrophosphatase (309 aa).

Residues His9, Asp13, Asp15, Asp75, His97, and Asp149 each coordinate Mn(2+).

It belongs to the PPase class C family. It depends on Mn(2+) as a cofactor.

It localises to the cytoplasm. It catalyses the reaction diphosphate + H2O = 2 phosphate + H(+). The polypeptide is Probable manganese-dependent inorganic pyrophosphatase (Bacillus velezensis (strain DSM 23117 / BGSC 10A6 / LMG 26770 / FZB42) (Bacillus amyloliquefaciens subsp. plantarum)).